The sequence spans 537 residues: Cytochrome P450 4F6 (537 aa).

Residue Cys-468 participates in heme binding.

It belongs to the cytochrome P450 family. Requires heme as cofactor. As to expression, high expression in liver and kidney. Lower expression in brain.

The protein resides in the endoplasmic reticulum membrane. Its subcellular location is the microsome membrane. It catalyses the reaction an organic molecule + reduced [NADPH--hemoprotein reductase] + O2 = an alcohol + oxidized [NADPH--hemoprotein reductase] + H2O + H(+). The chain is Cytochrome P450 4F6 (Cyp4f6) from Rattus norvegicus (Rat).